A 290-amino-acid polypeptide reads, in one-letter code: Diaminopimelate epimerase (290 aa).

Substrate contacts are provided by Asn17, Gln49, and Asn69. Cys78 serves as the catalytic Proton donor. Substrate is bound by residues 79 to 80, Asn165, Asn198, and 216 to 217; these read GN and ER. The active-site Proton acceptor is the Cys225. 226 to 227 is a substrate binding site; it reads GS.

This sequence belongs to the diaminopimelate epimerase family. Homodimer.

The protein resides in the cytoplasm. The catalysed reaction is (2S,6S)-2,6-diaminopimelate = meso-2,6-diaminopimelate. Its pathway is amino-acid biosynthesis; L-lysine biosynthesis via DAP pathway; DL-2,6-diaminopimelate from LL-2,6-diaminopimelate: step 1/1. Catalyzes the stereoinversion of LL-2,6-diaminopimelate (L,L-DAP) to meso-diaminopimelate (meso-DAP), a precursor of L-lysine and an essential component of the bacterial peptidoglycan. The polypeptide is Diaminopimelate epimerase (Methylocella silvestris (strain DSM 15510 / CIP 108128 / LMG 27833 / NCIMB 13906 / BL2)).